The chain runs to 191 residues: Thymidine kinase (191 aa).

ATP contacts are provided by residues 9 to 16 and 85 to 88; these read GSMNSGKT and DESQ. The active-site Proton acceptor is the glutamate 86. Residues cysteine 143, cysteine 146, cysteine 181, and cysteine 184 each coordinate Zn(2+).

It belongs to the thymidine kinase family. In terms of assembly, homotetramer.

It localises to the cytoplasm. The enzyme catalyses thymidine + ATP = dTMP + ADP + H(+). The protein is Thymidine kinase of Listeria monocytogenes serovar 1/2a (strain ATCC BAA-679 / EGD-e).